Here is a 370-residue protein sequence, read N- to C-terminus: 3-dehydroquinate synthase (370 aa).

Residues 112-116, 136-137, lysine 149, lysine 158, and 176-179 each bind NAD(+); these read GVVGD, TS, and TLRT. The Zn(2+) site is built by glutamate 191, histidine 254, and histidine 276.

This sequence belongs to the sugar phosphate cyclases superfamily. Dehydroquinate synthase family. Requires NAD(+) as cofactor. It depends on Co(2+) as a cofactor. The cofactor is Zn(2+).

It is found in the cytoplasm. The catalysed reaction is 7-phospho-2-dehydro-3-deoxy-D-arabino-heptonate = 3-dehydroquinate + phosphate. The protein operates within metabolic intermediate biosynthesis; chorismate biosynthesis; chorismate from D-erythrose 4-phosphate and phosphoenolpyruvate: step 2/7. In terms of biological role, catalyzes the conversion of 3-deoxy-D-arabino-heptulosonate 7-phosphate (DAHP) to dehydroquinate (DHQ). The polypeptide is 3-dehydroquinate synthase (Xanthomonas axonopodis pv. citri (strain 306)).